A 391-amino-acid polypeptide reads, in one-letter code: Na(+)/H(+) antiporter NhaA (391 aa).

The next 11 membrane-spanning stretches (helical) occupy residues 14-34, 59-79, 95-115, 124-144, 154-174, 177-197, 213-233, 261-281, 287-307, 328-348, and 363-383; these read AGGI…NSPL, LLLW…GLEV, SLPT…YLFF, VGWA…MALL, VFLL…IALF, TDLS…LVAL, IILW…GVVI, FLIL…NVGF, PVPV…VLLF, IAPV…IASL, and IGIL…LSKV.

Belongs to the NhaA Na(+)/H(+) (TC 2.A.33) antiporter family.

The protein resides in the cell inner membrane. The enzyme catalyses Na(+)(in) + 2 H(+)(out) = Na(+)(out) + 2 H(+)(in). Na(+)/H(+) antiporter that extrudes sodium in exchange for external protons. The polypeptide is Na(+)/H(+) antiporter NhaA (Shewanella amazonensis (strain ATCC BAA-1098 / SB2B)).